The sequence spans 202 residues: MSEEALGELSGYIRERLGDAIEEANLAYGELTLCVPVASLIGVLTLLRDDVQCQFVNLTDISGVDYPQREKRFDVVYQLLSPRQNQRIRVKVQADEDTLVPSAVPVFFGAEWYEREAYDMYGILFSGHPDLRRILTDYGFEGHPLRKDFPLTGFVEVRYNDELKRVVYEPVQLRQEFRNFDFLSPWEGTDYVLPGDEKAKTN.

It belongs to the complex I 30 kDa subunit family. In terms of assembly, NDH-1 is composed of 14 different subunits. Subunits NuoB, C, D, E, F, and G constitute the peripheral sector of the complex.

It localises to the cell inner membrane. It carries out the reaction a quinone + NADH + 5 H(+)(in) = a quinol + NAD(+) + 4 H(+)(out). In terms of biological role, NDH-1 shuttles electrons from NADH, via FMN and iron-sulfur (Fe-S) centers, to quinones in the respiratory chain. The immediate electron acceptor for the enzyme in this species is believed to be ubiquinone. Couples the redox reaction to proton translocation (for every two electrons transferred, four hydrogen ions are translocated across the cytoplasmic membrane), and thus conserves the redox energy in a proton gradient. In Brucella abortus (strain 2308), this protein is NADH-quinone oxidoreductase subunit C.